We begin with the raw amino-acid sequence, 2067 residues long: Negative regulator of mitosis (2067 aa).

A compositionally biased stretch (polar residues) spans 100–118 (SLAIPQTTSQQSNRPSGSE). Disordered stretches follow at residues 100–132 (SLAIPQTTSQQSNRPSGSESLDGKESRRSSTSK), 332–408 (ESIP…DDFA), and 452–480 (GSQSSTIHPGGLRQSIGAGSTRGSFGFNP). The Nuclear localization signal motif lies at 336 to 347 (SHRKKKRRDTGG). Positions 336-355 (SHRKKKRRDTGGTRSKRRSS) are enriched in basic residues. Residues 384-396 (WNASVMSHSQYST) show a composition bias toward polar residues. PC repeat units follow at residues 1434-1465 (AGIMGIGLLYCNSQHRRMSEVMLSEIENADQE), 1482-1520 (AAGFALGFINLGKGKDLKGMRDMHIVERLLAVAVGTKNV), 1532-1562 (GATIALAIIFMKTNDETLAQKVDIPDTTVRF), and 1625-1659 (GLCFALGLRFAGSPDPTVRDILLSYLDQFIRISRL). Residues 2020 to 2042 (FPSESDEEKRDRQETGSMPSSGH) are disordered.

This sequence belongs to the APC1 family.

Functionally, negative regulator of mitosis in E.nidulans. This protein is part of a regulatory pathway that includes the nimA protein kinase. It is required to prevent premature entry into mitosis. Mutations to this protein both cause cells to enter mitosis and prevent them from leaving mitosis. The polypeptide is Negative regulator of mitosis (bimE) (Emericella nidulans (strain FGSC A4 / ATCC 38163 / CBS 112.46 / NRRL 194 / M139) (Aspergillus nidulans)).